The primary structure comprises 320 residues: Ferrochelatase (320 aa).

Residues histidine 194 and glutamate 275 each contribute to the Fe cation site.

It belongs to the ferrochelatase family.

Its subcellular location is the cytoplasm. It catalyses the reaction heme b + 2 H(+) = protoporphyrin IX + Fe(2+). The protein operates within porphyrin-containing compound metabolism; protoheme biosynthesis; protoheme from protoporphyrin-IX: step 1/1. Catalyzes the ferrous insertion into protoporphyrin IX. The sequence is that of Ferrochelatase from Vibrio parahaemolyticus serotype O3:K6 (strain RIMD 2210633).